Here is an 824-residue protein sequence, read N- to C-terminus: FT-interacting protein 1 (824 aa).

C2 domains follow at residues 48–170 (WLGL…PQWY), 217–341 (VRGE…SRWF), and 385–522 (YISD…THAY). Helical transmembrane passes span 625-645 (AVSL…VCHW), 657-677 (LLLI…LYMF), and 764-784 (ATCL…VTPF).

Belongs to the MCTP family. Interacts with RFT1 and PI4KG4. In terms of tissue distribution, specifically expressed in the phloem including companion cells.

Its subcellular location is the endoplasmic reticulum membrane. Involved in the export of the long day-specific flower-promoting signal (florigen) RFT1 from the phloem companion cells to sieve elements. Promotes flowering under long days through the transport of RFT1 from the leaves to the shoot apical meristem (SAM). The protein is FT-interacting protein 1 of Oryza sativa subsp. japonica (Rice).